Consider the following 955-residue polypeptide: Disintegrin and metalloproteinase domain-containing protein 19 (955 aa).

The first 25 residues, 1-25, serve as a signal peptide directing secretion; sequence MPGGAGAARLCLLAFALQPLRPRAA. Residues 26 to 202 constitute a propeptide that is removed on maturation; it reads REPGWTRGSE…QTKKRPRRMK (177 aa). Residues 130–137 carry the Cysteine switch motif; it reads STCRGIRG. Position 132 (Cys-132) interacts with Zn(2+). Asn-144 carries N-linked (GlcNAc...) asparagine glycosylation. Topologically, residues 203–699 are extracellular; it reads REDLNSMKYV…IDSGPMPPES (497 aa). The 199-residue stretch at 210–408 folds into the Peptidase M12B domain; that stretch reads KYVELYLVAD…GGGMCLSNMP (199 aa). 3 cysteine pairs are disulfide-bonded: Cys-320–Cys-403, Cys-360–Cys-387, and Cys-361–Cys-370. His-345 is a binding site for Zn(2+). Glu-346 is a catalytic residue. Zn(2+) contacts are provided by His-349 and His-355. The Disintegrin domain occupies 416 to 502; the sequence is GRRCGNGYLE…HCPTNFYQMD (87 aa). 2 N-linked (GlcNAc...) asparagine glycosylation sites follow: Asn-444 and Asn-447. Cysteines 474 and 494 form a disulfide. Asn-645 is a glycosylation site (N-linked (GlcNAc...) asparagine). Residues 650–682 form the EGF-like domain; that stretch reads ETEGCGKKCNGHGVCNNNQNCHCLPGWAPPFCN. Cystine bridges form between Cys-654–Cys-664, Cys-658–Cys-670, and Cys-672–Cys-681. The helical transmembrane segment at 700–720 threads the bilayer; it reads VGPVVAGVLVAILVLAVLMLM. The Cytoplasmic portion of the chain corresponds to 721 to 955; it reads YYCCRQNNKL…AKHSCFLVPA (235 aa). The segment covering 753–771 has biased composition (polar residues); it reads SQNSGTGHANPTFKLQTPQ. A disordered region spans residues 753–917; the sequence is SQNSGTGHAN…LKVKAGTRGL (165 aa). Pro residues-rich tracts occupy residues 787–796 and 833–844; these read SQPPPRPPPD and RPPPSRPIPPAP. The SH3-binding signature appears at 833-844; that stretch reads RPPPSRPIPPAP.

As to quaternary structure, interacts with SH3PXD2A. It depends on Zn(2+) as a cofactor. The precursor is cleaved by a furin endopeptidase. Expressed in many normal organ tissues and several cancer cell lines.

Its subcellular location is the membrane. In terms of biological role, participates in the proteolytic processing of beta-type neuregulin isoforms which are involved in neurogenesis and synaptogenesis, suggesting a regulatory role in glial cell. Also cleaves alpha-2 macroglobulin. May be involved in osteoblast differentiation and/or osteoblast activity in bone. In Homo sapiens (Human), this protein is Disintegrin and metalloproteinase domain-containing protein 19 (ADAM19).